Here is a 381-residue protein sequence, read N- to C-terminus: MALEEISERLQVSDFPTLGMAANYDLRRHKFESLANDGSHEMRADVRRWVGNPSDFGGCNPINGHIIALTMPMIKPDRVKIAGYIYECWFLYSWDLTTTLTGADGFFHDDILEGTNEGVSDTDAFGLGTADQDAKARDGRKQIQAKMMYLLETTDKACAKHLQKVWSNMLVTTIQHKSRDFETLKEYIDFRIRDCGALFGEGVMLFGMGLALTEKDREDVASTIYPCYAALGLTNDYFSFDREWEEAKRTGEAKFSNAVRLFMDWQSTGAAAAKEVVRKAIIEYEREFLELREKFVKANPKAERLHKFLEAMVYQISGHVVWSINCPRYNPSFRYDPNSGVENQVLAERRGKSSSKKPSVMIEEIDEKSHLASETGPAMIA.

It belongs to the terpene synthase family.

It participates in mycotoxin biosynthesis. In terms of biological role, terpene cyclase; part of the core atranone cluster (CAC) which products are predicted to catalyze most or all steps of mycotoxin atranone synthesis, starting from geranylgeranyl pyrophosphate (GGPP). The initial cyclization of GGPP to dolabellane is probably performed by the terpene cyclase ATR13. The Baeyer-Villiger oxidation near the end of the atranone synthesis, which converts atranones D and E to atranones F and G is predicted to be catalyzed by the monooxygenase ATR8. Of the CAC's other predicted gene products, the reducing PKS ATR6 might synthesize a polyketide chain. This polyketide is probably transferred onto the atranone backbone by the polyketide transferase ATR5. Other predicted CAC products include 4 oxygenases (ATR2, ATR3, ATR4, and ATR14), 3 short-chain reductases (ATR7, ATR9, and ATR10), and a methyltransferase (ATR12). These may all be involved in the various steps of atranone biosynthesis, although their specific roles must await experimental determination. The polypeptide is Terpene cyclase ATR13 (Stachybotrys chlorohalonatus (strain IBT 40285)).